The chain runs to 215 residues: Small ribosomal subunit protein uS7 (215 aa).

It belongs to the universal ribosomal protein uS7 family. As to quaternary structure, part of the 30S ribosomal subunit.

Its function is as follows. One of the primary rRNA binding proteins, it binds directly to 16S rRNA where it nucleates assembly of the head domain of the 30S subunit. Is located at the subunit interface close to the decoding center. The polypeptide is Small ribosomal subunit protein uS7 (Pyrococcus furiosus (strain ATCC 43587 / DSM 3638 / JCM 8422 / Vc1)).